The following is a 503-amino-acid chain: ATP-dependent RNA helicase dbp3 (503 aa).

The span at Met-1 to Glu-25 shows a compositional bias: basic and acidic residues. Positions Met-1–Ala-35 are disordered. Residues Ser-104–Gln-112 carry the Q motif motif. The Helicase ATP-binding domain maps to Trp-116 to Val-292. Ala-129–Thr-136 is an ATP binding site. The short motif at Asp-239–Asp-242 is the DEAD box element. The Helicase C-terminal domain maps to Arg-307–Gly-472.

It belongs to the DEAD box helicase family. DDX5/DBP2 subfamily.

It localises to the nucleus. It is found in the nucleolus. The enzyme catalyses ATP + H2O = ADP + phosphate + H(+). ATP-dependent RNA helicase required for 60S ribosomal subunit synthesis. Involved in efficient pre-rRNA processing, predominantly at site A3, which is necessary for the normal formation of 25S and 5.8S rRNAs. The chain is ATP-dependent RNA helicase dbp3 (dbp3) from Neosartorya fischeri (strain ATCC 1020 / DSM 3700 / CBS 544.65 / FGSC A1164 / JCM 1740 / NRRL 181 / WB 181) (Aspergillus fischerianus).